The sequence spans 106 residues: Large ribosomal subunit protein uL24 (106 aa).

The protein belongs to the universal ribosomal protein uL24 family. In terms of assembly, part of the 50S ribosomal subunit.

Its function is as follows. One of two assembly initiator proteins, it binds directly to the 5'-end of the 23S rRNA, where it nucleates assembly of the 50S subunit. In terms of biological role, one of the proteins that surrounds the polypeptide exit tunnel on the outside of the subunit. This chain is Large ribosomal subunit protein uL24, found in Albidiferax ferrireducens (strain ATCC BAA-621 / DSM 15236 / T118) (Rhodoferax ferrireducens).